The following is a 287-amino-acid chain: Phosphatidylserine decarboxylase proenzyme (287 aa).

Catalysis depends on charge relay system; for autoendoproteolytic cleavage activity residues aspartate 89, histidine 146, and serine 252. The Schiff-base intermediate with substrate; via pyruvic acid; for decarboxylase activity role is filled by serine 252. Serine 252 bears the Pyruvic acid (Ser); by autocatalysis mark.

The protein belongs to the phosphatidylserine decarboxylase family. PSD-B subfamily. Prokaryotic type I sub-subfamily. As to quaternary structure, heterodimer of a large membrane-associated beta subunit and a small pyruvoyl-containing alpha subunit. It depends on pyruvate as a cofactor. In terms of processing, is synthesized initially as an inactive proenzyme. Formation of the active enzyme involves a self-maturation process in which the active site pyruvoyl group is generated from an internal serine residue via an autocatalytic post-translational modification. Two non-identical subunits are generated from the proenzyme in this reaction, and the pyruvate is formed at the N-terminus of the alpha chain, which is derived from the carboxyl end of the proenzyme. The autoendoproteolytic cleavage occurs by a canonical serine protease mechanism, in which the side chain hydroxyl group of the serine supplies its oxygen atom to form the C-terminus of the beta chain, while the remainder of the serine residue undergoes an oxidative deamination to produce ammonia and the pyruvoyl prosthetic group on the alpha chain. During this reaction, the Ser that is part of the protease active site of the proenzyme becomes the pyruvoyl prosthetic group, which constitutes an essential element of the active site of the mature decarboxylase.

Its subcellular location is the cell membrane. It carries out the reaction a 1,2-diacyl-sn-glycero-3-phospho-L-serine + H(+) = a 1,2-diacyl-sn-glycero-3-phosphoethanolamine + CO2. Its pathway is phospholipid metabolism; phosphatidylethanolamine biosynthesis; phosphatidylethanolamine from CDP-diacylglycerol: step 2/2. In terms of biological role, catalyzes the formation of phosphatidylethanolamine (PtdEtn) from phosphatidylserine (PtdSer). This Shewanella woodyi (strain ATCC 51908 / MS32) protein is Phosphatidylserine decarboxylase proenzyme.